Reading from the N-terminus, the 360-residue chain is Protein YIM1-1 (360 aa).

It belongs to the YIM1 family.

It localises to the lipid droplet. The protein resides in the mitochondrion. This Lachancea thermotolerans (strain ATCC 56472 / CBS 6340 / NRRL Y-8284) (Yeast) protein is Protein YIM1-1 (YIM1-1).